A 513-amino-acid polypeptide reads, in one-letter code: Na(+)/H(+) antiporter NhaB (513 aa).

A run of 12 helical transmembrane segments spans residues 23–43, 52–72, 97–117, 120–140, 144–164, 202–222, 238–258, 303–323, 348–368, 391–411, 447–467, and 475–495; these read LALI…PFVA, IFTL…LLAI, LLLM…LFIF, LLLS…AAAF, FLDA…FYGI, LMMH…VGEP, FFLR…LTCL, AIIG…VGLI, TESL…AVII, LFYI…VGTI, ATPN…APLI, and VWMA…CVEF.

Belongs to the NhaB Na(+)/H(+) (TC 2.A.34) antiporter family.

Its subcellular location is the cell inner membrane. It catalyses the reaction 2 Na(+)(in) + 3 H(+)(out) = 2 Na(+)(out) + 3 H(+)(in). In terms of biological role, na(+)/H(+) antiporter that extrudes sodium in exchange for external protons. The chain is Na(+)/H(+) antiporter NhaB from Escherichia coli O45:K1 (strain S88 / ExPEC).